Reading from the N-terminus, the 190-residue chain is Protein GrpE (190 aa).

Belongs to the GrpE family. Homodimer.

It is found in the cytoplasm. Its function is as follows. Participates actively in the response to hyperosmotic and heat shock by preventing the aggregation of stress-denatured proteins, in association with DnaK and GrpE. It is the nucleotide exchange factor for DnaK and may function as a thermosensor. Unfolded proteins bind initially to DnaJ; upon interaction with the DnaJ-bound protein, DnaK hydrolyzes its bound ATP, resulting in the formation of a stable complex. GrpE releases ADP from DnaK; ATP binding to DnaK triggers the release of the substrate protein, thus completing the reaction cycle. Several rounds of ATP-dependent interactions between DnaJ, DnaK and GrpE are required for fully efficient folding. In Streptococcus agalactiae serotype III (strain NEM316), this protein is Protein GrpE.